We begin with the raw amino-acid sequence, 346 residues long: Methylthioribose-1-phosphate isomerase (346 aa).

Residues 54-56 (RGA), Arg91, and Gln192 each bind substrate. The active-site Proton donor is the Asp233. 243-244 (NK) provides a ligand contact to substrate.

Belongs to the eIF-2B alpha/beta/delta subunits family. MtnA subfamily.

The catalysed reaction is 5-(methylsulfanyl)-alpha-D-ribose 1-phosphate = 5-(methylsulfanyl)-D-ribulose 1-phosphate. Its pathway is amino-acid biosynthesis; L-methionine biosynthesis via salvage pathway; L-methionine from S-methyl-5-thio-alpha-D-ribose 1-phosphate: step 1/6. In terms of biological role, catalyzes the interconversion of methylthioribose-1-phosphate (MTR-1-P) into methylthioribulose-1-phosphate (MTRu-1-P). This is Methylthioribose-1-phosphate isomerase from Yersinia pseudotuberculosis serotype IB (strain PB1/+).